Here is a 57-residue protein sequence, read N- to C-terminus: Large ribosomal subunit protein bL32 (57 aa).

The disordered stretch occupies residues 1-38 (MAVQQNKPTRSKRGMRRSHDALTAVTSLSVDQTSGEKH). Polar residues predominate over residues 24–33 (AVTSLSVDQT).

The protein belongs to the bacterial ribosomal protein bL32 family.

This chain is Large ribosomal subunit protein bL32, found in Enterobacter sp. (strain 638).